A 198-amino-acid chain; its full sequence is Small ribosomal subunit protein uS2 (198 aa).

Belongs to the universal ribosomal protein uS2 family.

This chain is Small ribosomal subunit protein uS2 (rps2), found in Methanothermobacter thermautotrophicus (strain ATCC 29096 / DSM 1053 / JCM 10044 / NBRC 100330 / Delta H) (Methanobacterium thermoautotrophicum).